The sequence spans 544 residues: Chaperonin GroEL 2 (544 aa).

ATP is bound by residues Thr29–Pro32, Asp86–Thr90, Gly413, Asn479–Ala481, and Asp495.

The protein belongs to the chaperonin (HSP60) family. As to quaternary structure, forms a cylinder of 14 subunits composed of two heptameric rings stacked back-to-back. Interacts with the co-chaperonin GroES.

The protein localises to the cytoplasm. The catalysed reaction is ATP + H2O + a folded polypeptide = ADP + phosphate + an unfolded polypeptide.. In terms of biological role, together with its co-chaperonin GroES, plays an essential role in assisting protein folding. The GroEL-GroES system forms a nano-cage that allows encapsulation of the non-native substrate proteins and provides a physical environment optimized to promote and accelerate protein folding. This chain is Chaperonin GroEL 2, found in Synechococcus sp. (strain WH7803).